The sequence spans 412 residues: Acyl-[acyl-carrier-protein] hydrolase FATB2, chloroplastic (412 aa).

Composition is skewed to low complexity over residues 1–13 (TAAS…VPSA) and 56–66 (GSSVGLKSGGL). Residues 1 to 46 (TAASSAFFPVPSADTSSRPGKLGNGPSSFSPLKPKSIPNGGLQVKA) constitute a chloroplast transit peptide. The disordered stretch occupies residues 1–78 (TAASSAFFPV…HDDAPSAPPP (78 aa)). Active-site residues include Asn-311, His-313, and Cys-348.

This sequence belongs to the acyl-ACP thioesterase family.

It localises to the plastid. Its subcellular location is the chloroplast. It carries out the reaction tetradecanoyl-[ACP] + H2O = tetradecanoate + holo-[ACP] + H(+). It catalyses the reaction hexadecanoyl-[ACP] + H2O = hexadecanoate + holo-[ACP] + H(+). In terms of biological role, plays an essential role in chain termination during de novo fatty acid synthesis. Possesses thioesterase activity for medium chain acyl-ACPs. Substrate preference is 14:0 &gt; 16:0 &gt; 16:1. The protein is Acyl-[acyl-carrier-protein] hydrolase FATB2, chloroplastic of Cuphea viscosissima (Blue waxweed).